Here is a 283-residue protein sequence, read N- to C-terminus: Thymidylate synthase (283 aa).

R22 provides a ligand contact to dUMP. The active-site Nucleophile is the C160. DUMP contacts are provided by residues 180-183 (RSCD), N191, and 221-223 (HIY). Residue D183 participates in (6R)-5,10-methylene-5,6,7,8-tetrahydrofolate binding. S282 contributes to the (6R)-5,10-methylene-5,6,7,8-tetrahydrofolate binding site.

Belongs to the thymidylate synthase family. Bacterial-type ThyA subfamily. In terms of assembly, homodimer.

It localises to the cytoplasm. The enzyme catalyses dUMP + (6R)-5,10-methylene-5,6,7,8-tetrahydrofolate = 7,8-dihydrofolate + dTMP. It functions in the pathway pyrimidine metabolism; dTTP biosynthesis. Catalyzes the reductive methylation of 2'-deoxyuridine-5'-monophosphate (dUMP) to 2'-deoxythymidine-5'-monophosphate (dTMP) while utilizing 5,10-methylenetetrahydrofolate (mTHF) as the methyl donor and reductant in the reaction, yielding dihydrofolate (DHF) as a by-product. This enzymatic reaction provides an intracellular de novo source of dTMP, an essential precursor for DNA biosynthesis. The sequence is that of Thymidylate synthase from Pasteurella multocida (strain Pm70).